We begin with the raw amino-acid sequence, 272 residues long: NH(3)-dependent NAD(+) synthetase (272 aa).

Residue 45-52 (GISGGQDS) participates in ATP binding. Asp-51 serves as a coordination point for Mg(2+). Arg-138 lines the deamido-NAD(+) pocket. Thr-158 is an ATP binding site. Mg(2+) is bound at residue Glu-163. Positions 171 and 178 each coordinate deamido-NAD(+). 2 residues coordinate ATP: Lys-187 and Thr-209. Residue 258–259 (HK) participates in deamido-NAD(+) binding.

It belongs to the NAD synthetase family. In terms of assembly, homodimer.

It catalyses the reaction deamido-NAD(+) + NH4(+) + ATP = AMP + diphosphate + NAD(+) + H(+). Its pathway is cofactor biosynthesis; NAD(+) biosynthesis; NAD(+) from deamido-NAD(+) (ammonia route): step 1/1. Functionally, catalyzes the ATP-dependent amidation of deamido-NAD to form NAD. Uses ammonia as a nitrogen source. The protein is NH(3)-dependent NAD(+) synthetase of Bacillus cereus (strain AH187).